We begin with the raw amino-acid sequence, 536 residues long: MKSKFIFITGGVVSSLGKGLTAASIGMLLKSRGYSVVNQKFDPYLNVDPGTMNPYQHGEVFVTEDGGETDLDLGHYERFTDVPLHKFNSTSAGKVYLAILDRERAGGYNGGTVQVVPHVTDEIQSRILGTAEQTGADFVISEIGGTVGDIEALPFIEAIRQIRYTVGKENCMFVHLGLLPYLKECGEIKTKPMQHSVKELLSFGIQPDILICRSEKRLSKSTREKLSLFSNIPQDAIIENLTAKSIYEVPLMLEEAGLGKVLCKLFNIENKEPNLEEWKKMVQTYYNPEKEITIALVGKYVELPDAYLSVAEALTAAGIYHKTSIKLLWIDSKKIETKEDAAAFLKDADGIIVPGGFGDRGINGMLLTAQFARENKIPYFGICLGMQISAIEYALNALHIEEANSSEFDKNAKNPVIDLMPDQKDVKIGGTLRLGLYRCMIAEGSLAEKAYKSHEIQERHRHRYEFNNLYREKFDNSDMIFSGLNPERNLVEIVELKSHPWFVAVQFHPEFASRPNKPHPLFRDFIKAAVDNKINR.

The segment at 1–268 (MKSKFIFITG…GKVLCKLFNI (268 aa)) is amidoligase domain. Ser-14 is a CTP binding site. Ser-14 contacts UTP. Residue 15–20 (SLGKGL) coordinates ATP. Residue Tyr-55 participates in L-glutamine binding. Asp-72 serves as a coordination point for ATP. Residues Asp-72 and Glu-142 each contribute to the Mg(2+) site. Residues 149–151 (DIE), 189–194 (KTKPMQ), and Lys-225 each bind CTP. Residues 189-194 (KTKPMQ) and Lys-225 contribute to the UTP site. A Glutamine amidotransferase type-1 domain is found at 293-535 (TIALVGKYVE…IKAAVDNKIN (243 aa)). An L-glutamine-binding site is contributed by Gly-356. The Nucleophile; for glutamine hydrolysis role is filled by Cys-383. L-glutamine-binding positions include 384-387 (LGMQ), Glu-407, and Arg-463. Active-site residues include His-508 and Glu-510.

The protein belongs to the CTP synthase family. In terms of assembly, homotetramer.

The enzyme catalyses UTP + L-glutamine + ATP + H2O = CTP + L-glutamate + ADP + phosphate + 2 H(+). It carries out the reaction L-glutamine + H2O = L-glutamate + NH4(+). The catalysed reaction is UTP + NH4(+) + ATP = CTP + ADP + phosphate + 2 H(+). The protein operates within pyrimidine metabolism; CTP biosynthesis via de novo pathway; CTP from UDP: step 2/2. With respect to regulation, allosterically activated by GTP, when glutamine is the substrate; GTP has no effect on the reaction when ammonia is the substrate. The allosteric effector GTP functions by stabilizing the protein conformation that binds the tetrahedral intermediate(s) formed during glutamine hydrolysis. Inhibited by the product CTP, via allosteric rather than competitive inhibition. In terms of biological role, catalyzes the ATP-dependent amination of UTP to CTP with either L-glutamine or ammonia as the source of nitrogen. Regulates intracellular CTP levels through interactions with the four ribonucleotide triphosphates. The polypeptide is CTP synthase (Treponema denticola (strain ATCC 35405 / DSM 14222 / CIP 103919 / JCM 8153 / KCTC 15104)).